The chain runs to 460 residues: ATP synthase subunit beta (460 aa).

150–157 (GGAGVGKT) is an ATP binding site.

Belongs to the ATPase alpha/beta chains family. F-type ATPases have 2 components, CF(1) - the catalytic core - and CF(0) - the membrane proton channel. CF(1) has five subunits: alpha(3), beta(3), gamma(1), delta(1), epsilon(1). CF(0) has three main subunits: a(1), b(2) and c(9-12). The alpha and beta chains form an alternating ring which encloses part of the gamma chain. CF(1) is attached to CF(0) by a central stalk formed by the gamma and epsilon chains, while a peripheral stalk is formed by the delta and b chains.

Its subcellular location is the cell inner membrane. It carries out the reaction ATP + H2O + 4 H(+)(in) = ADP + phosphate + 5 H(+)(out). In terms of biological role, produces ATP from ADP in the presence of a proton gradient across the membrane. The catalytic sites are hosted primarily by the beta subunits. The sequence is that of ATP synthase subunit beta from Yersinia enterocolitica serotype O:8 / biotype 1B (strain NCTC 13174 / 8081).